Here is a 184-residue protein sequence, read N- to C-terminus: Photosystem I assembly protein Ycf4 (184 aa).

A run of 2 helical transmembrane segments spans residues 22–42 (FCWA…GISS) and 57–77 (ILFF…LFIS).

It belongs to the Ycf4 family.

It is found in the plastid. It localises to the chloroplast thylakoid membrane. Seems to be required for the assembly of the photosystem I complex. The chain is Photosystem I assembly protein Ycf4 from Populus trichocarpa (Western balsam poplar).